The chain runs to 79 residues: Probable Fe(2+)-trafficking protein (79 aa).

Belongs to the Fe(2+)-trafficking protein family. As to quaternary structure, monomer.

Its function is as follows. Could be a mediator in iron transactions between iron acquisition and iron-requiring processes, such as synthesis and/or repair of Fe-S clusters in biosynthetic enzymes. The chain is Probable Fe(2+)-trafficking protein from Blochmanniella floridana.